The sequence spans 212 residues: ATP-dependent Clp protease proteolytic subunit (212 aa).

Residue serine 112 is the Nucleophile of the active site. Residue histidine 137 is part of the active site.

It belongs to the peptidase S14 family. Fourteen ClpP subunits assemble into 2 heptameric rings which stack back to back to give a disk-like structure with a central cavity, resembling the structure of eukaryotic proteasomes.

It localises to the cytoplasm. It catalyses the reaction Hydrolysis of proteins to small peptides in the presence of ATP and magnesium. alpha-casein is the usual test substrate. In the absence of ATP, only oligopeptides shorter than five residues are hydrolyzed (such as succinyl-Leu-Tyr-|-NHMec, and Leu-Tyr-Leu-|-Tyr-Trp, in which cleavage of the -Tyr-|-Leu- and -Tyr-|-Trp bonds also occurs).. Its function is as follows. Cleaves peptides in various proteins in a process that requires ATP hydrolysis. Has a chymotrypsin-like activity. Plays a major role in the degradation of misfolded proteins. In Thiobacillus denitrificans (strain ATCC 25259 / T1), this protein is ATP-dependent Clp protease proteolytic subunit.